The primary structure comprises 162 residues: Probable chemoreceptor glutamine deamidase CheD (162 aa).

The protein belongs to the CheD family.

It catalyses the reaction L-glutaminyl-[protein] + H2O = L-glutamyl-[protein] + NH4(+). In terms of biological role, probably deamidates glutamine residues to glutamate on methyl-accepting chemotaxis receptors (MCPs), playing an important role in chemotaxis. The protein is Probable chemoreceptor glutamine deamidase CheD of Syntrophotalea carbinolica (strain DSM 2380 / NBRC 103641 / GraBd1) (Pelobacter carbinolicus).